The following is a 432-amino-acid chain: Aspartate aminotransferase (432 aa).

45-46 (RG) contributes to the substrate binding site. 109-111 (SSL) is a pyridoxal 5'-phosphate binding site. 148-150 (YDR) lines the substrate pocket. Pyridoxal 5'-phosphate-binding positions include Asn197, Tyr229, and 262–265 (STSK). Substrate is bound at residue Arg400.

It belongs to the class-I pyridoxal-phosphate-dependent aminotransferase family. In terms of assembly, homodimer. Requires pyridoxal 5'-phosphate as cofactor.

The catalysed reaction is L-aspartate + 2-oxoglutarate = oxaloacetate + L-glutamate. This Corynebacterium glutamicum (strain ATCC 13032 / DSM 20300 / JCM 1318 / BCRC 11384 / CCUG 27702 / LMG 3730 / NBRC 12168 / NCIMB 10025 / NRRL B-2784 / 534) protein is Aspartate aminotransferase.